A 141-amino-acid chain; its full sequence is Cystatin-S (141 aa).

A signal peptide spans 1–20; sequence MARPLCTLLLLMATLAGALA. 2 positions are modified to phosphoserine: Ser-21 and Ser-23. Positions 76-80 match the Secondary area of contact motif; it reads QTFGG. 2 disulfides stabilise this stretch: Cys-94/Cys-104 and Cys-118/Cys-138.

Belongs to the cystatin family. Phosphorylated at both its N- and C-terminal regions. In terms of tissue distribution, expressed in submandibular and sublingual saliva but not in parotid saliva (at protein level). Expressed in saliva, tears, urine and seminal fluid.

The protein resides in the secreted. Its function is as follows. This protein strongly inhibits papain and ficin, partially inhibits stem bromelain and bovine cathepsin C, but does not inhibit porcine cathepsin B or clostripain. Papain is inhibited non-competitively. This chain is Cystatin-S (CST4), found in Homo sapiens (Human).